Consider the following 333-residue polypeptide: tRNA N6-adenosine threonylcarbamoyltransferase (333 aa).

The Fe cation site is built by His-111 and His-115. Residues 134 to 138 (VVSGG), Asp-167, Gly-180, Asp-184, and Asn-269 each bind substrate. A Fe cation-binding site is contributed by Asp-297.

This sequence belongs to the KAE1 / TsaD family. Fe(2+) serves as cofactor.

It is found in the cytoplasm. It carries out the reaction L-threonylcarbamoyladenylate + adenosine(37) in tRNA = N(6)-L-threonylcarbamoyladenosine(37) in tRNA + AMP + H(+). Required for the formation of a threonylcarbamoyl group on adenosine at position 37 (t(6)A37) in tRNAs that read codons beginning with adenine. Is involved in the transfer of the threonylcarbamoyl moiety of threonylcarbamoyl-AMP (TC-AMP) to the N6 group of A37, together with TsaE and TsaB. TsaD likely plays a direct catalytic role in this reaction. The sequence is that of tRNA N6-adenosine threonylcarbamoyltransferase from Carboxydothermus hydrogenoformans (strain ATCC BAA-161 / DSM 6008 / Z-2901).